Reading from the N-terminus, the 349-residue chain is Anthranilate phosphoribosyltransferase (349 aa).

5-phospho-alpha-D-ribose 1-diphosphate is bound by residues Gly-86, 89 to 90, Thr-94, 96 to 99, 114 to 122, and Ser-126; these read GD, NIST, and KHGNKSASG. Gly-86 provides a ligand contact to anthranilate. Ser-98 is a Mg(2+) binding site. Asn-117 contributes to the anthranilate binding site. Arg-172 contributes to the anthranilate binding site. Mg(2+) is bound by residues Asp-231 and Glu-232.

The protein belongs to the anthranilate phosphoribosyltransferase family. In terms of assembly, homodimer. Mg(2+) is required as a cofactor.

It catalyses the reaction N-(5-phospho-beta-D-ribosyl)anthranilate + diphosphate = 5-phospho-alpha-D-ribose 1-diphosphate + anthranilate. The protein operates within amino-acid biosynthesis; L-tryptophan biosynthesis; L-tryptophan from chorismate: step 2/5. Its function is as follows. Catalyzes the transfer of the phosphoribosyl group of 5-phosphorylribose-1-pyrophosphate (PRPP) to anthranilate to yield N-(5'-phosphoribosyl)-anthranilate (PRA). The protein is Anthranilate phosphoribosyltransferase of Prochlorococcus marinus (strain MIT 9312).